The chain runs to 235 residues: Sperm-associated microtubule inner protein 5 (235 aa).

Microtubule inner protein component of sperm flagellar doublet microtubules. Expressed in sperm.

The protein resides in the cytoplasm. It localises to the cytoskeleton. The protein localises to the flagellum axoneme. It is found in the nucleus. Microtubule inner protein (MIP) part of the dynein-decorated doublet microtubules (DMTs) in flagellum axoneme. May serve to reinforce and thus stabilize the microtubule structure in the sperm flagella. The chain is Sperm-associated microtubule inner protein 5 (SPMIP5) from Bos taurus (Bovine).